A 236-amino-acid chain; its full sequence is tRNA1(Val) (adenine(37)-N6)-methyltransferase (236 aa).

This sequence belongs to the methyltransferase superfamily. tRNA (adenine-N(6)-)-methyltransferase family.

It localises to the cytoplasm. The enzyme catalyses adenosine(37) in tRNA1(Val) + S-adenosyl-L-methionine = N(6)-methyladenosine(37) in tRNA1(Val) + S-adenosyl-L-homocysteine + H(+). Functionally, specifically methylates the adenine in position 37 of tRNA(1)(Val) (anticodon cmo5UAC). This chain is tRNA1(Val) (adenine(37)-N6)-methyltransferase, found in Shewanella sp. (strain MR-4).